The primary structure comprises 388 residues: MDRISGLPDELLVKIISFVPTKVAVSTSILSKRWESLWKWVPKLECDCTEPALRDFILKNLPLQARIIESLYLRFRRESFLFQDIKLWGGIAISHCLRELRIDFFSHYANPYVILPRSLYTCKSLVTLKLLGLGIRVDVPRDVCLPSLKTLLLQCVAYSEEDPLRLLLSCCPVLEDLVIELDDANQNVKALVVIVPTLQCLSLKIPASCSDERYLIVTPSLKYFKVEDDREIFNALIENMPELEEADIYVTQHIETLLESVTSVKRLTLRQLYNSIDEYKCRAGIVFKQLEQLELSICSDNWTKLVIWLLQNSPNLRVLNLDADSDYERYEEYEQDNWKNIQRSVPKCLKSSLKTLEFAGYTARPEERDFLSFIFKKARCLKTSSISH.

Positions 1 to 47 constitute an F-box domain; that stretch reads MDRISGLPDELLVKIISFVPTKVAVSTSILSKRWESLWKWVPKLECD. The FBD domain maps to 337 to 388; that stretch reads NWKNIQRSVPKCLKSSLKTLEFAGYTARPEERDFLSFIFKKARCLKTSSISH.

The protein is FBD-associated F-box protein At5g60610 of Arabidopsis thaliana (Mouse-ear cress).